A 481-amino-acid chain; its full sequence is Leukocyte immunoglobulin-like receptor subfamily A member 6 (481 aa).

A signal peptide spans 1–23 (MTPALTALLCLGLSLGPRTRVQA). The Extracellular portion of the chain corresponds to 24–447 (GPFPKPTLWA…SHAKDYTVEN (424 aa)). Residues cysteine 49 and cysteine 98 are joined by a disulfide bond. A compositionally biased stretch (basic and acidic residues) spans 59 to 70 (QLDKEGSPEPLD). The tract at residues 59–78 (QLDKEGSPEPLDRNNPLEPK) is disordered. A glycan (N-linked (GlcNAc...) asparagine) is linked at asparagine 139. 2 disulfides stabilise this stretch: cysteine 144/cysteine 196 and cysteine 245/cysteine 296. 2 Ig-like C2-type domains span residues 225-314 (PSLL…DPLN) and 323-408 (DTVS…HLLS). N-linked (GlcNAc...) asparagine glycosylation is found at asparagine 301 and asparagine 340. The cysteines at positions 345 and 396 are disulfide-linked. The tract at residues 419 to 439 (SGHSGGSSLPPTGPPSTPASH) is disordered. The helical transmembrane segment at 448-468 (LIRMGMAGLVLVFLGILLFEA) threads the bilayer. At 469–481 (QHSQRNPQDAAGR) the chain is on the cytoplasmic side.

The protein resides in the membrane. Functionally, may act as receptor for class I MHC antigens. The sequence is that of Leukocyte immunoglobulin-like receptor subfamily A member 6 (LILRA6) from Homo sapiens (Human).